We begin with the raw amino-acid sequence, 156 residues long: Organelle RRM domain-containing protein 2, mitochondrial (156 aa).

A mitochondrion-targeting transit peptide spans 1–28; sequence MAMAMRLPAISRAVTEVASAPVGLRRLF. One can recognise an RRM domain in the interval 56–134; that stretch reads TNLFVSGLSK…WVIFAEYARP (79 aa). Phosphoserine is present on serine 64. Over residues 137–148 the composition is skewed to polar residues; it reads QSQSYQPQNNMS. The interval 137-156 is disordered; that stretch reads QSQSYQPQNNMSRPPYYGNR.

As to quaternary structure, interacts with RBG3/ORRM3. Binds to RBG2/ORRM5.

Its subcellular location is the mitochondrion. Its function is as follows. Involved in C-to-U editing of mitochondrial RNA. Functions as minor mitochondrial editing factor. Controls 6 percent of the mitochondrial editing sites. The polypeptide is Organelle RRM domain-containing protein 2, mitochondrial (Arabidopsis thaliana (Mouse-ear cress)).